Here is a 281-residue protein sequence, read N- to C-terminus: MLLEFTKMHGLGNDFMVVDLISQRAYLDTATIQRLADRHFGVGFDQLLIVEPPDVPEADFKYRIFNADGSEVEQCGNGVRCFARFVHERHLTNKTNITVQTKAGIVKPELGQNGWVRVNMGYPKFLPNEIPFVAEEPEALYTLELANDQNISIDVVNMGNPHAVTIVPDVLTADVAGIGPQVESHKRFPERVNAGFMQVIDDKHVRLRVFERGVGETLACGTGACAAAVSGMRRGLLANSVEVELAGGKLQIEWQEGDVVWMTGPTTHVYDGRLDLRYFQG.

Substrate contacts are provided by N13, Q46, and N66. Residue C75 is the Proton donor of the active site. Residues 76–77, N160, N193, and 211–212 contribute to the substrate site; these read GN and ER. C220 functions as the Proton acceptor in the catalytic mechanism. Residue 221 to 222 participates in substrate binding; sequence GT.

It belongs to the diaminopimelate epimerase family. Homodimer.

Its subcellular location is the cytoplasm. It carries out the reaction (2S,6S)-2,6-diaminopimelate = meso-2,6-diaminopimelate. It functions in the pathway amino-acid biosynthesis; L-lysine biosynthesis via DAP pathway; DL-2,6-diaminopimelate from LL-2,6-diaminopimelate: step 1/1. Its function is as follows. Catalyzes the stereoinversion of LL-2,6-diaminopimelate (L,L-DAP) to meso-diaminopimelate (meso-DAP), a precursor of L-lysine and an essential component of the bacterial peptidoglycan. This chain is Diaminopimelate epimerase, found in Acinetobacter baumannii (strain AB307-0294).